The sequence spans 130 residues: Small ribosomal subunit protein uS9 (130 aa).

Residues 102-130 (GFLTRDPRMKERKKYGLKKARRSPQFSKR) form a disordered region. The span at 111 to 130 (KERKKYGLKKARRSPQFSKR) shows a compositional bias: basic residues.

The protein belongs to the universal ribosomal protein uS9 family.

The protein is Small ribosomal subunit protein uS9 of Clostridium botulinum (strain ATCC 19397 / Type A).